The following is a 500-amino-acid chain: Protein DETOXIFICATION 24 (500 aa).

The segment at 1–20 (MSTQEEMEERLLREGSDAEG) is disordered. 12 helical membrane-spanning segments follow: residues 48-67 (SSLF…AFIG), 72-92 (LGLA…YGLM), 124-144 (IVDM…GPIL), 160-180 (IYPW…IQMY), 188-208 (AIVG…TWWC), 225-245 (VGSW…WCPF), 266-286 (ISSG…VLMA), 298-318 (AFSI…GFLG), 342-362 (VILT…LAFC), 384-404 (VILA…GVAV), 411-431 (IVAV…GLIL), and 441-461 (GLWS…CYII).

It belongs to the multi antimicrobial extrusion (MATE) (TC 2.A.66.1) family.

It is found in the membrane. This is Protein DETOXIFICATION 24 from Arabidopsis thaliana (Mouse-ear cress).